The chain runs to 109 residues: uncharacterized protein (109 aa).

This is an uncharacterized protein from Enterobacteriaceae (Bacteriophage P2).